Here is an 818-residue protein sequence, read N- to C-terminus: Structure-specific endonuclease subunit SLX4 (818 aa).

Disordered regions lie at residues Met1–Ser39, Arg53–Asn151, Phe279–Ser324, Asn413–Lys437, and Met587–Glu712. Low complexity predominate over residues Val28–Ser39. Basic and acidic residues predominate over residues Pro90–Phe103. Residues Thr306–Thr316 show a composition bias toward low complexity. Residues Thr426–Lys437 are compositionally biased toward polar residues. The segment covering Gln604–Ala618 has biased composition (basic and acidic residues). 3 stretches are compositionally biased toward polar residues: residues Ser621 to Gly640, Ser652 to Val672, and Ser696 to Glu712.

This sequence belongs to the SLX4 family. In terms of assembly, forms a heterodimer with SLX1. Phosphorylated in response to DNA damage.

It localises to the nucleus. In terms of biological role, regulatory subunit of the SLX1-SLX4 structure-specific endonuclease that resolves DNA secondary structures generated during DNA repair and recombination. Has endonuclease activity towards branched DNA substrates, introducing single-strand cuts in duplex DNA close to junctions with ss-DNA. This Uncinocarpus reesii (strain UAMH 1704) protein is Structure-specific endonuclease subunit SLX4.